Reading from the N-terminus, the 367-residue chain is UDP-N-acetylglucosamine--N-acetylmuramyl-(pentapeptide) pyrophosphoryl-undecaprenol N-acetylglucosamine transferase (367 aa).

UDP-N-acetyl-alpha-D-glucosamine is bound by residues 13-15, N125, R165, S192, and Q293; that span reads TGG.

The protein belongs to the glycosyltransferase 28 family. MurG subfamily.

It is found in the cell inner membrane. It catalyses the reaction di-trans,octa-cis-undecaprenyl diphospho-N-acetyl-alpha-D-muramoyl-L-alanyl-D-glutamyl-meso-2,6-diaminopimeloyl-D-alanyl-D-alanine + UDP-N-acetyl-alpha-D-glucosamine = di-trans,octa-cis-undecaprenyl diphospho-[N-acetyl-alpha-D-glucosaminyl-(1-&gt;4)]-N-acetyl-alpha-D-muramoyl-L-alanyl-D-glutamyl-meso-2,6-diaminopimeloyl-D-alanyl-D-alanine + UDP + H(+). It functions in the pathway cell wall biogenesis; peptidoglycan biosynthesis. In terms of biological role, cell wall formation. Catalyzes the transfer of a GlcNAc subunit on undecaprenyl-pyrophosphoryl-MurNAc-pentapeptide (lipid intermediate I) to form undecaprenyl-pyrophosphoryl-MurNAc-(pentapeptide)GlcNAc (lipid intermediate II). The sequence is that of UDP-N-acetylglucosamine--N-acetylmuramyl-(pentapeptide) pyrophosphoryl-undecaprenol N-acetylglucosamine transferase from Jannaschia sp. (strain CCS1).